Reading from the N-terminus, the 258-residue chain is Acetylglutamate kinase (258 aa).

Residues 41 to 42 (GG), Arg63, and Asn156 contribute to the substrate site.

It belongs to the acetylglutamate kinase family. ArgB subfamily.

It localises to the cytoplasm. The enzyme catalyses N-acetyl-L-glutamate + ATP = N-acetyl-L-glutamyl 5-phosphate + ADP. It functions in the pathway amino-acid biosynthesis; L-arginine biosynthesis; N(2)-acetyl-L-ornithine from L-glutamate: step 2/4. Its function is as follows. Catalyzes the ATP-dependent phosphorylation of N-acetyl-L-glutamate. The polypeptide is Acetylglutamate kinase (Geobacillus kaustophilus (strain HTA426)).